We begin with the raw amino-acid sequence, 213 residues long: Imidazole glycerol phosphate synthase subunit HisH (213 aa).

A Glutamine amidotransferase type-1 domain is found at 4 to 213 (SIAIVDYGMG…LYRNFVHWNP (210 aa)). C83 functions as the Nucleophile in the catalytic mechanism. Residues H193 and E195 contribute to the active site.

As to quaternary structure, heterodimer of HisH and HisF.

It is found in the cytoplasm. It catalyses the reaction 5-[(5-phospho-1-deoxy-D-ribulos-1-ylimino)methylamino]-1-(5-phospho-beta-D-ribosyl)imidazole-4-carboxamide + L-glutamine = D-erythro-1-(imidazol-4-yl)glycerol 3-phosphate + 5-amino-1-(5-phospho-beta-D-ribosyl)imidazole-4-carboxamide + L-glutamate + H(+). The catalysed reaction is L-glutamine + H2O = L-glutamate + NH4(+). It participates in amino-acid biosynthesis; L-histidine biosynthesis; L-histidine from 5-phospho-alpha-D-ribose 1-diphosphate: step 5/9. In terms of biological role, IGPS catalyzes the conversion of PRFAR and glutamine to IGP, AICAR and glutamate. The HisH subunit catalyzes the hydrolysis of glutamine to glutamate and ammonia as part of the synthesis of IGP and AICAR. The resulting ammonia molecule is channeled to the active site of HisF. The sequence is that of Imidazole glycerol phosphate synthase subunit HisH from Burkholderia pseudomallei (strain K96243).